Consider the following 467-residue polypeptide: UDP-N-acetylmuramate--L-alanine ligase (467 aa).

112–118 (GTHGKTT) contributes to the ATP binding site.

The protein belongs to the MurCDEF family.

The protein localises to the cytoplasm. It carries out the reaction UDP-N-acetyl-alpha-D-muramate + L-alanine + ATP = UDP-N-acetyl-alpha-D-muramoyl-L-alanine + ADP + phosphate + H(+). It participates in cell wall biogenesis; peptidoglycan biosynthesis. Cell wall formation. This chain is UDP-N-acetylmuramate--L-alanine ligase, found in Polaromonas sp. (strain JS666 / ATCC BAA-500).